The following is a 92-amino-acid chain: Alpha-elapitoxin-Lh2a (92 aa).

The first 21 residues, 1-21, serve as a signal peptide directing secretion; sequence MKTLLLTLVVVTIVCLDLGDS. 5 cysteine pairs are disulfide-bonded: Cys-24/Cys-41, Cys-34/Cys-62, Cys-47/Cys-51, Cys-66/Cys-77, and Cys-78/Cys-83.

The protein belongs to the three-finger toxin family. Long-chain subfamily. Type II alpha-neurotoxin sub-subfamily. As to expression, expressed by the venom gland.

Its subcellular location is the secreted. Functionally, binds with high affinity to muscular (alpha-1/CHRNA1) and neuronal (alpha-7/CHRNA7) nicotinic acetylcholine receptor (nAChR) and inhibits acetylcholine from binding to the receptor, thereby impairing neuromuscular and neuronal transmission. This is Alpha-elapitoxin-Lh2a from Hydrophis hardwickii (Hardwick's spine-bellied seasnake).